The chain runs to 317 residues: Beta-ketoacyl-[acyl-carrier-protein] synthase III (317 aa).

Active-site residues include Cys112 and His244. The segment at 245-249 (QANLR) is ACP-binding. Asn274 is a catalytic residue.

It belongs to the thiolase-like superfamily. FabH family. In terms of assembly, homodimer.

Its subcellular location is the cytoplasm. It catalyses the reaction malonyl-[ACP] + acetyl-CoA + H(+) = 3-oxobutanoyl-[ACP] + CO2 + CoA. It participates in lipid metabolism; fatty acid biosynthesis. Catalyzes the condensation reaction of fatty acid synthesis by the addition to an acyl acceptor of two carbons from malonyl-ACP. Catalyzes the first condensation reaction which initiates fatty acid synthesis and may therefore play a role in governing the total rate of fatty acid production. Possesses both acetoacetyl-ACP synthase and acetyl transacylase activities. Its substrate specificity determines the biosynthesis of branched-chain and/or straight-chain of fatty acids. In Shigella boydii serotype 4 (strain Sb227), this protein is Beta-ketoacyl-[acyl-carrier-protein] synthase III.